We begin with the raw amino-acid sequence, 162 residues long: Serine-protein kinase RsbW (162 aa).

This sequence belongs to the anti-sigma-factor family.

The enzyme catalyses L-seryl-[protein] + ATP = O-phospho-L-seryl-[protein] + ADP + H(+). It carries out the reaction L-threonyl-[protein] + ATP = O-phospho-L-threonyl-[protein] + ADP + H(+). Negative regulator of sigma-B activity. Phosphorylates and inactivates its specific antagonist protein, RsbV. Upon phosphorylation of RsbV, RsbW is released and binds to sigma-B, thereby blocking its ability to form an RNA polymerase holoenzyme (E-sigma-B). This Bacillus pumilus (strain SAFR-032) protein is Serine-protein kinase RsbW.